Reading from the N-terminus, the 57-residue chain is Small ribosomal subunit protein bS21 (57 aa).

Residues 24–57 are disordered; sequence SKSGTLQESRKREFYEKPSVKRKKKSEAARKRKF. Basic and acidic residues predominate over residues 31-42; that stretch reads ESRKREFYEKPS. A compositionally biased stretch (basic residues) spans 43 to 57; sequence VKRKKKSEAARKRKF.

This sequence belongs to the bacterial ribosomal protein bS21 family.

In Listeria innocua serovar 6a (strain ATCC BAA-680 / CLIP 11262), this protein is Small ribosomal subunit protein bS21 (rpsU).